Here is a 454-residue protein sequence, read N- to C-terminus: tRNA modification GTPase MnmE (454 aa).

R23, E80, and K120 together coordinate (6S)-5-formyl-5,6,7,8-tetrahydrofolate. A TrmE-type G domain is found at G216 to G377. Position 226 (N226) interacts with K(+). Residues N226–S231, T245–T251, D270–G273, and S358–R360 contribute to the GTP site. S230 contacts Mg(2+). Residues T245, I247, and T250 each coordinate K(+). T251 serves as a coordination point for Mg(2+). K454 serves as a coordination point for (6S)-5-formyl-5,6,7,8-tetrahydrofolate.

This sequence belongs to the TRAFAC class TrmE-Era-EngA-EngB-Septin-like GTPase superfamily. TrmE GTPase family. As to quaternary structure, homodimer. Heterotetramer of two MnmE and two MnmG subunits. K(+) serves as cofactor.

The protein resides in the cytoplasm. Its function is as follows. Exhibits a very high intrinsic GTPase hydrolysis rate. Involved in the addition of a carboxymethylaminomethyl (cmnm) group at the wobble position (U34) of certain tRNAs, forming tRNA-cmnm(5)s(2)U34. The chain is tRNA modification GTPase MnmE from Proteus mirabilis (strain HI4320).